The following is a 208-amino-acid chain: Potassium-transporting ATPase KdpC subunit (208 aa).

Residues 6 to 26 form a helical membrane-spanning segment; the sequence is PALLVSIVLLVVCGLVYPLVL.

It belongs to the KdpC family. The system is composed of three essential subunits: KdpA, KdpB and KdpC.

The protein resides in the cell membrane. In terms of biological role, part of the high-affinity ATP-driven potassium transport (or Kdp) system, which catalyzes the hydrolysis of ATP coupled with the electrogenic transport of potassium into the cytoplasm. This subunit acts as a catalytic chaperone that increases the ATP-binding affinity of the ATP-hydrolyzing subunit KdpB by the formation of a transient KdpB/KdpC/ATP ternary complex. This chain is Potassium-transporting ATPase KdpC subunit, found in Clostridioides difficile (strain 630) (Peptoclostridium difficile).